The primary structure comprises 542 residues: CTP synthase (542 aa).

The interval 1 to 265 is amidoligase domain; the sequence is MARYVFITGG…DSEVLSAFGI (265 aa). Residue serine 13 coordinates CTP. Serine 13 contacts UTP. ATP is bound at residue 14-19; the sequence is SLGKGI. Tyrosine 54 is a binding site for L-glutamine. Residue aspartate 71 participates in ATP binding. Aspartate 71 and glutamate 139 together coordinate Mg(2+). Residues 146-148, 186-191, and lysine 222 each bind CTP; these read DIE and KTKPTQ. UTP-binding positions include 186–191 and lysine 222; that span reads KTKPTQ. In terms of domain architecture, Glutamine amidotransferase type-1 spans 291 to 541; it reads TIAVVGKYTG…IEAAIEQSRL (251 aa). L-glutamine is bound at residue glycine 353. Catalysis depends on cysteine 380, which acts as the Nucleophile; for glutamine hydrolysis. Residues 381–384, glutamate 404, and arginine 469 each bind L-glutamine; that span reads FGMQ. Residues histidine 514 and glutamate 516 contribute to the active site.

Belongs to the CTP synthase family. In terms of assembly, homotetramer.

It carries out the reaction UTP + L-glutamine + ATP + H2O = CTP + L-glutamate + ADP + phosphate + 2 H(+). The catalysed reaction is L-glutamine + H2O = L-glutamate + NH4(+). It catalyses the reaction UTP + NH4(+) + ATP = CTP + ADP + phosphate + 2 H(+). Its pathway is pyrimidine metabolism; CTP biosynthesis via de novo pathway; CTP from UDP: step 2/2. Its activity is regulated as follows. Allosterically activated by GTP, when glutamine is the substrate; GTP has no effect on the reaction when ammonia is the substrate. The allosteric effector GTP functions by stabilizing the protein conformation that binds the tetrahedral intermediate(s) formed during glutamine hydrolysis. Inhibited by the product CTP, via allosteric rather than competitive inhibition. Catalyzes the ATP-dependent amination of UTP to CTP with either L-glutamine or ammonia as the source of nitrogen. Regulates intracellular CTP levels through interactions with the four ribonucleotide triphosphates. This Brucella suis (strain ATCC 23445 / NCTC 10510) protein is CTP synthase.